The chain runs to 154 residues: Putative pre-16S rRNA nuclease (154 aa).

Belongs to the YqgF nuclease family.

It is found in the cytoplasm. Functionally, could be a nuclease involved in processing of the 5'-end of pre-16S rRNA. This chain is Putative pre-16S rRNA nuclease, found in Rickettsia rickettsii (strain Iowa).